Here is a 264-residue protein sequence, read N- to C-terminus: Putative HTH-type transcriptional regulator TrmBL2 (264 aa).

Residues leucine 33 to arginine 54 constitute a DNA-binding region (H-T-H motif).

It belongs to the transcriptional regulator TrmB family.

In terms of biological role, binds to the maltodextrin transport gene cluster (mdxE operon) promoter and to some other TGM (Thermococcales-Glycolytic-Motif) sequences, but not exclusively. This is Putative HTH-type transcriptional regulator TrmBL2 (trmBL2) from Pyrococcus furiosus (strain ATCC 43587 / DSM 3638 / JCM 8422 / Vc1).